Consider the following 580-residue polypeptide: UPF0329 protein ECU06_0080 (580 aa).

The segment covering 308–330 has biased composition (basic and acidic residues); the sequence is RQKRREREMEKSMKELLRDEEKA. A disordered region spans residues 308–384; it reads RQKRREREME…KTGKKSKGGR (77 aa). A compositionally biased stretch (basic residues) spans 331–340; sequence KSKKGRKKKS. Residues 351–363 are compositionally biased toward acidic residues; the sequence is SETEEVEASEEME. The segment covering 372–384 has biased composition (basic residues); it reads ARRKTGKKSKGGR.

Belongs to the UPF0329 family.

In Encephalitozoon cuniculi (strain GB-M1) (Microsporidian parasite), this protein is UPF0329 protein ECU06_0080.